Reading from the N-terminus, the 95-residue chain is Aspartyl/glutamyl-tRNA(Asn/Gln) amidotransferase subunit C (95 aa).

It belongs to the GatC family. In terms of assembly, heterotrimer of A, B and C subunits.

The catalysed reaction is L-glutamyl-tRNA(Gln) + L-glutamine + ATP + H2O = L-glutaminyl-tRNA(Gln) + L-glutamate + ADP + phosphate + H(+). It carries out the reaction L-aspartyl-tRNA(Asn) + L-glutamine + ATP + H2O = L-asparaginyl-tRNA(Asn) + L-glutamate + ADP + phosphate + 2 H(+). In terms of biological role, allows the formation of correctly charged Asn-tRNA(Asn) or Gln-tRNA(Gln) through the transamidation of misacylated Asp-tRNA(Asn) or Glu-tRNA(Gln) in organisms which lack either or both of asparaginyl-tRNA or glutaminyl-tRNA synthetases. The reaction takes place in the presence of glutamine and ATP through an activated phospho-Asp-tRNA(Asn) or phospho-Glu-tRNA(Gln). The polypeptide is Aspartyl/glutamyl-tRNA(Asn/Gln) amidotransferase subunit C (Syntrophotalea carbinolica (strain DSM 2380 / NBRC 103641 / GraBd1) (Pelobacter carbinolicus)).